We begin with the raw amino-acid sequence, 271 residues long: Mitochondrial distribution and morphology protein 12 (271 aa).

Positions Met-1 to Asn-267 constitute an SMP-LTD domain. Residue Lys-49 forms a Glycyl lysine isopeptide (Lys-Gly) (interchain with G-Cter in ubiquitin) linkage.

The protein belongs to the MDM12 family. Component of the ER-mitochondria encounter structure (ERMES) or MDM complex, composed of MMM1, MDM10, MDM12 and MDM34. An MMM1 homodimer associates with one molecule of MDM12 on each side in a pairwise head-to-tail manner, and the SMP-LTD domains of MMM1 and MDM12 generate a continuous hydrophobic tunnel for phospholipid trafficking. Interacts with PUF3.

The protein resides in the mitochondrion outer membrane. The protein localises to the endoplasmic reticulum membrane. Its function is as follows. Component of the ERMES/MDM complex, which serves as a molecular tether to connect the endoplasmic reticulum (ER) and mitochondria. Components of this complex are involved in the control of mitochondrial shape and protein biogenesis, and function in nonvesicular lipid trafficking between the ER and mitochondria. MDM12 is required for the interaction of the ER-resident membrane protein MMM1 and the outer mitochondrial membrane-resident beta-barrel protein MDM10. The MDM12-MMM1 subcomplex functions in the major beta-barrel assembly pathway that is responsible for biogenesis of all mitochondrial outer membrane beta-barrel proteins, and acts in a late step after the SAM complex. The MDM10-MDM12-MMM1 subcomplex further acts in the TOM40-specific pathway after the action of the MDM12-MMM1 complex. Essential for establishing and maintaining the structure of mitochondria and maintenance of mtDNA nucleoids. This Saccharomyces cerevisiae (strain AWRI1631) (Baker's yeast) protein is Mitochondrial distribution and morphology protein 12.